The following is a 288-amino-acid chain: Inositol monophosphatase 2 (288 aa).

Residues Glu81, Asp101, Ile103, and Asp104 each coordinate Mg(2+). A substrate-binding site is contributed by Glu81. Residues 103 to 106 (IDGT), 205 to 207 (GSS), Gln224, and Asp231 each bind substrate. Asp231 provides a ligand contact to Mg(2+).

This sequence belongs to the inositol monophosphatase superfamily. Homodimer. Mg(2+) is required as a cofactor.

Its subcellular location is the cytoplasm. The enzyme catalyses a myo-inositol phosphate + H2O = myo-inositol + phosphate. It catalyses the reaction 1D-myo-inositol 1-phosphate + H2O = myo-inositol + phosphate. It carries out the reaction 1D-myo-inositol 2-phosphate + H2O = myo-inositol + phosphate. The catalysed reaction is 1D-myo-inositol 3-phosphate + H2O = myo-inositol + phosphate. The enzyme catalyses 1D-myo-inositol 4-phosphate + H2O = myo-inositol + phosphate. It catalyses the reaction 1D-myo-inositol 5-phosphate + H2O = myo-inositol + phosphate. It carries out the reaction 1D-myo-inositol 6-phosphate + H2O = myo-inositol + phosphate. The catalysed reaction is alpha-D-glucose 1-phosphate + H2O = D-glucose + phosphate. The enzyme catalyses glycerol 2-phosphate + H2O = glycerol + phosphate. It catalyses the reaction adenosine 2'-phosphate + H2O = adenosine + phosphate. Its pathway is polyol metabolism; myo-inositol biosynthesis; myo-inositol from D-glucose 6-phosphate: step 2/2. With respect to regulation, inhibited by high Li(+) and restricted Mg(2+) concentrations. Its function is as follows. Phosphatase that can use myo-inositol monophosphates, myo-inositol 1,4-diphosphate, scyllo-inositol-1,4-diphosphate, glucose-1-phosphate, beta-glycerophosphate and 2'-AMP as substrates in vitro. It is likely that IMPA2 has an as yet unidentified in vivo substrate(s). Has been implicated as the pharmacological target for lithium (Li(+)) action in brain. This chain is Inositol monophosphatase 2, found in Homo sapiens (Human).